The sequence spans 259 residues: Ubiquinone/menaquinone biosynthesis C-methyltransferase UbiE (259 aa).

Residues Thr-82, Asp-103, 131–132, and Ser-148 contribute to the S-adenosyl-L-methionine site; that span reads NA.

Belongs to the class I-like SAM-binding methyltransferase superfamily. MenG/UbiE family.

The catalysed reaction is a 2-demethylmenaquinol + S-adenosyl-L-methionine = a menaquinol + S-adenosyl-L-homocysteine + H(+). It carries out the reaction a 2-methoxy-6-(all-trans-polyprenyl)benzene-1,4-diol + S-adenosyl-L-methionine = a 5-methoxy-2-methyl-3-(all-trans-polyprenyl)benzene-1,4-diol + S-adenosyl-L-homocysteine + H(+). Its pathway is quinol/quinone metabolism; menaquinone biosynthesis; menaquinol from 1,4-dihydroxy-2-naphthoate: step 2/2. It participates in cofactor biosynthesis; ubiquinone biosynthesis. In terms of biological role, methyltransferase required for the conversion of demethylmenaquinol (DMKH2) to menaquinol (MKH2) and the conversion of 2-polyprenyl-6-methoxy-1,4-benzoquinol (DDMQH2) to 2-polyprenyl-3-methyl-6-methoxy-1,4-benzoquinol (DMQH2). This Haemophilus ducreyi (strain 35000HP / ATCC 700724) protein is Ubiquinone/menaquinone biosynthesis C-methyltransferase UbiE.